We begin with the raw amino-acid sequence, 281 residues long: Hydroxyethylthiazole kinase (281 aa).

Arginine 124 and serine 169 together coordinate ATP.

This sequence belongs to the Thz kinase family. Mg(2+) serves as cofactor.

The catalysed reaction is 5-(2-hydroxyethyl)-4-methylthiazole + ATP = 4-methyl-5-(2-phosphooxyethyl)-thiazole + ADP + H(+). It functions in the pathway cofactor biosynthesis; thiamine diphosphate biosynthesis; 4-methyl-5-(2-phosphoethyl)-thiazole from 5-(2-hydroxyethyl)-4-methylthiazole: step 1/1. In terms of biological role, catalyzes the phosphorylation of the hydroxyl group of 4-methyl-5-beta-hydroxyethylthiazole (THZ). The protein is Hydroxyethylthiazole kinase of Rhodococcus erythropolis (strain PR4 / NBRC 100887).